We begin with the raw amino-acid sequence, 354 residues long: UDP-3-O-acylglucosamine N-acyltransferase (354 aa).

The active-site Proton acceptor is His-247.

The protein belongs to the transferase hexapeptide repeat family. LpxD subfamily. Homotrimer.

It carries out the reaction a UDP-3-O-[(3R)-3-hydroxyacyl]-alpha-D-glucosamine + a (3R)-hydroxyacyl-[ACP] = a UDP-2-N,3-O-bis[(3R)-3-hydroxyacyl]-alpha-D-glucosamine + holo-[ACP] + H(+). The protein operates within bacterial outer membrane biogenesis; LPS lipid A biosynthesis. Functionally, catalyzes the N-acylation of UDP-3-O-acylglucosamine using 3-hydroxyacyl-ACP as the acyl donor. Is involved in the biosynthesis of lipid A, a phosphorylated glycolipid that anchors the lipopolysaccharide to the outer membrane of the cell. The polypeptide is UDP-3-O-acylglucosamine N-acyltransferase (Chlamydia trachomatis serovar A (strain ATCC VR-571B / DSM 19440 / HAR-13)).